A 5104-amino-acid polypeptide reads, in one-letter code: Malformin synthetase mlfA (5104 aa).

The segment at 225 to 616 is adenylation 1; it reads ERHAVNRPHS…CGRADTQVKL (392 aa). The 74-residue stretch at 757 to 830 folds into the Carrier 1 domain; sequence SRLEQEIQLA…EAASLAEVQE (74 aa). O-(pantetheine 4'-phosphoryl)serine is present on Ser791. The condensation 1 stretch occupies residues 868-1299; the sequence is EDVFPCTTMQ…ALNTLSLLQA (432 aa). Positions 1327-1716 are adenylation 2; it reads DRWVTRQPEG…GRKDTQVKLR (390 aa). The 78-residue stretch at 1854 to 1931 folds into the Carrier 2 domain; it reads TPASELERTL…QLAAEFGGPA (78 aa). Ser1891 is modified (O-(pantetheine 4'-phosphoryl)serine). Disordered regions lie at residues 1928–1961 and 1998–2025; these read GGPAGQSASSASSTTEERFTFSTPDDSSTNDGVD and TNKTPSVSSSSSSSSSSEKKKKAAKVDS. 2 stretches are compositionally biased toward low complexity: residues 1934 to 1958 and 2003 to 2013; these read SASSASSTTEERFTFSTPDDSSTND and SVSSSSSSSSS. Positions 2066–2481 are condensation 2; the sequence is EDIYPATPLQ…TVSYSDKEAL (416 aa). Residues 2504–2896 form an adenylation 3 region; sequence VRTPHAPAVC…IGRRDGQLKL (393 aa). The 77-residue stretch at 3032-3108 folds into the Carrier 3 domain; that stretch reads RPVTSQEREM…QLICHLNTIR (77 aa). O-(pantetheine 4'-phosphoryl)serine is present on Ser3069. 2 condensation regions span residues 3125 to 3590 and 3611 to 4029; these read WVAL…TYDQ and NIYP…EQLV. The adenylation 4 stretch occupies residues 4054–4444; the sequence is HSSREAVCAW…VGRKDNQIKF (391 aa). The region spanning 4578–4654 is the Carrier 4 domain; the sequence is MPSTAAERKM…DLSDQARSLI (77 aa). The residue at position 4615 (Ser4615) is an O-(pantetheine 4'-phosphoryl)serine. Residues 4691–5018 form a condensation 5 region; the sequence is DVLPTTSFQR…LQTIVQHQNN (328 aa).

This sequence belongs to the NRP synthetase family.

It functions in the pathway secondary metabolite biosynthesis. Its function is as follows. Nonribosomal peptide synthetase; part of the gene cluster that mediates the biosynthesis of malformins, cyclic pentapeptides with a disulfide bond between 2 consecutive cysteins, that show potential anti-tumor as well as antimalarial and antitrypanosomal properties. The nonribosomal peptide synthetase mlfA is responsible of the formation of the cyclic pentapeptide. The malformin biosynthesis clusters in malformin-producing fungi also contain enzymes involved in the formation of the disulfide bond between the two consecutive cysteins within malformins, in addition to additional tailoring enzymes such as methyltransferases or oxidoreductases. They are also composed of up to 4 major facilitator superfamily transporters, and transcription factors probably involved in the regulation of the expression of those clusters. This is Malformin synthetase mlfA from Aspergillus vadensis (strain CBS 113365 / IMI 142717 / IBT 24658).